The following is a 189-amino-acid chain: Nucleoside triphosphate pyrophosphatase (189 aa).

Residue aspartate 70 is the Proton acceptor of the active site.

Belongs to the Maf family. A divalent metal cation is required as a cofactor.

The protein resides in the cytoplasm. It catalyses the reaction a ribonucleoside 5'-triphosphate + H2O = a ribonucleoside 5'-phosphate + diphosphate + H(+). The enzyme catalyses a 2'-deoxyribonucleoside 5'-triphosphate + H2O = a 2'-deoxyribonucleoside 5'-phosphate + diphosphate + H(+). Nucleoside triphosphate pyrophosphatase. May have a dual role in cell division arrest and in preventing the incorporation of modified nucleotides into cellular nucleic acids. This Xylella fastidiosa (strain 9a5c) protein is Nucleoside triphosphate pyrophosphatase.